Consider the following 404-residue polypeptide: Serine/threonine transporter SstT (404 aa).

A run of 9 helical transmembrane segments spans residues 17-37 (IGIG…VTAI), 44-64 (FVGA…VQAI), 75-95 (ITLI…VAVI), 138-158 (ALAT…GLAL), 179-199 (IVVW…FSTV), 212-232 (LLIL…NPLL), 287-307 (IPLG…VLTL), 319-339 (FLTA…ASGV), and 354-374 (FGIS…VGVI).

It belongs to the dicarboxylate/amino acid:cation symporter (DAACS) (TC 2.A.23) family.

Its subcellular location is the cell membrane. The catalysed reaction is L-serine(in) + Na(+)(in) = L-serine(out) + Na(+)(out). It catalyses the reaction L-threonine(in) + Na(+)(in) = L-threonine(out) + Na(+)(out). Functionally, involved in the import of serine and threonine into the cell, with the concomitant import of sodium (symport system). The sequence is that of Serine/threonine transporter SstT from Streptococcus equi subsp. zooepidemicus (strain MGCS10565).